A 197-amino-acid polypeptide reads, in one-letter code: Probable nicotinate-nucleotide adenylyltransferase (197 aa).

This sequence belongs to the NadD family.

The catalysed reaction is nicotinate beta-D-ribonucleotide + ATP + H(+) = deamido-NAD(+) + diphosphate. The protein operates within cofactor biosynthesis; NAD(+) biosynthesis; deamido-NAD(+) from nicotinate D-ribonucleotide: step 1/1. Its function is as follows. Catalyzes the reversible adenylation of nicotinate mononucleotide (NaMN) to nicotinic acid adenine dinucleotide (NaAD). This chain is Probable nicotinate-nucleotide adenylyltransferase, found in Neisseria meningitidis serogroup C (strain 053442).